The primary structure comprises 369 residues: Dual specificity protein phosphatase 1-B (369 aa).

The region spanning 21–138 is the Rhodanese domain; that stretch reads RAHKCLILDC…FSSQCPEFCN (118 aa). Thr-168 carries the post-translational modification Phosphothreonine; by MAPK1. The region spanning 175-316 is the Tyrosine-protein phosphatase domain; that stretch reads GPVEILPFLY…LLQFESQVLA (142 aa). Cys-260 functions as the Phosphocysteine intermediate in the catalytic mechanism.

The protein belongs to the protein-tyrosine phosphatase family. Non-receptor class dual specificity subfamily. In terms of processing, phosphorylated by MAPK1/ERK2 at Thr-168 and at one or more serine residues in a progesterone-dependent manner. Phosphorylation reduces its rate of degradation but does not seem to affect phosphatase activity.

Its subcellular location is the nucleus. It catalyses the reaction O-phospho-L-seryl-[protein] + H2O = L-seryl-[protein] + phosphate. The enzyme catalyses O-phospho-L-threonyl-[protein] + H2O = L-threonyl-[protein] + phosphate. It carries out the reaction O-phospho-L-tyrosyl-[protein] + H2O = L-tyrosyl-[protein] + phosphate. Its function is as follows. Dual specificity phosphatase that dephosphorylates MAP kinase MAPK1/ERK2 on both 'Thr-188' and 'Tyr-190', regulating its activity during the meiotic cell cycle. This chain is Dual specificity protein phosphatase 1-B, found in Xenopus laevis (African clawed frog).